We begin with the raw amino-acid sequence, 122 residues long: Large ribosomal subunit protein uL14c (122 aa).

This sequence belongs to the universal ribosomal protein uL14 family. Part of the 50S ribosomal subunit.

It is found in the plastid. It localises to the chloroplast. Its function is as follows. Binds to 23S rRNA. This chain is Large ribosomal subunit protein uL14c, found in Lepidium virginicum (Virginia pepperweed).